We begin with the raw amino-acid sequence, 394 residues long: Na(+)/H(+) antiporter NhaA (394 aa).

Transmembrane regions (helical) follow at residues 17–37 (ILLM…LAGV), 59–79 (LLLW…GLEV), 95–115 (SLPS…YLAF), 124–144 (VGWA…MALL), 154–174 (VFLL…IALF), 177–197 (TDLS…MVAL), 213–233 (FILW…GVII), 261–281 (FMIL…NMTL), 287–307 (PITL…VLLF), 328–348 (IIPV…IASL), and 363–383 (LGIL…LAKV).

The protein belongs to the NhaA Na(+)/H(+) (TC 2.A.33) antiporter family.

The protein localises to the cell inner membrane. The catalysed reaction is Na(+)(in) + 2 H(+)(out) = Na(+)(out) + 2 H(+)(in). In terms of biological role, na(+)/H(+) antiporter that extrudes sodium in exchange for external protons. In Shewanella frigidimarina (strain NCIMB 400), this protein is Na(+)/H(+) antiporter NhaA.